The chain runs to 426 residues: Enolase (426 aa).

Gln163 contributes to the (2R)-2-phosphoglycerate binding site. The Proton donor role is filled by Glu205. Positions 242, 285, and 312 each coordinate Mg(2+). Lys337, Arg366, Ser367, and Lys388 together coordinate (2R)-2-phosphoglycerate. Lys337 functions as the Proton acceptor in the catalytic mechanism.

The protein belongs to the enolase family. The cofactor is Mg(2+).

It is found in the cytoplasm. The protein localises to the secreted. Its subcellular location is the cell surface. It carries out the reaction (2R)-2-phosphoglycerate = phosphoenolpyruvate + H2O. The protein operates within carbohydrate degradation; glycolysis; pyruvate from D-glyceraldehyde 3-phosphate: step 4/5. Its function is as follows. Catalyzes the reversible conversion of 2-phosphoglycerate (2-PG) into phosphoenolpyruvate (PEP). It is essential for the degradation of carbohydrates via glycolysis. The chain is Enolase from Caulobacter vibrioides (strain ATCC 19089 / CIP 103742 / CB 15) (Caulobacter crescentus).